A 164-amino-acid chain; its full sequence is Polygalacturonase (164 aa).

This sequence belongs to the glycosyl hydrolase 28 family.

It is found in the secreted. Its subcellular location is the cell wall. The catalysed reaction is (1,4-alpha-D-galacturonosyl)n+m + H2O = (1,4-alpha-D-galacturonosyl)n + (1,4-alpha-D-galacturonosyl)m.. The polypeptide is Polygalacturonase (Cupressus sempervirens (Italian cypress)).